A 427-amino-acid chain; its full sequence is MEIHGKNFLETLKELEKHVDSAHYVSIDCEFSGLLRDFNLNNKNTLQDRYELLRKSSIRYTILQIGITFIYLQNNGKSSCIPVNINVSPLVKDELHLKRDFCSEASSIKFLIQQGFDFNKQLTEGVPYLSRIEERNLIDKVNERSTDDLTSSILDACDEEILVDARNQIKNWLSSELSHSTSKYLNITTSNRFIRKAIQSLVKIEFPTLKSYPKRTFLQVRKAIENSTTQCSATSKSELKEDIASDQLILNNLNLIKQNVGLRHLWDYILKKKKSVVCHNGMADLVYLFSLFEGKVPETILEFSELCLSSFKSIYDTKLLYLKSDDLQHVSDGIPTDLLSLVSKISLPPVPSNSSSQRSNVSLNSLIECPYKSMMSRKRPHEAGKDSYDTALLFVYYVMRTKHSDIQRWQNVLPIHGSFLDLNKYCS.

Belongs to the CAF1 family.

This is an uncharacterized protein from Schizosaccharomyces pombe (strain 972 / ATCC 24843) (Fission yeast).